A 304-amino-acid chain; its full sequence is Olfactory receptor 52A4 (304 aa).

Residues 1–32 are Extracellular-facing; that stretch reads MALPITNGTLFMPFVLTFIGIPGFESVQCWIG. N-linked (GlcNAc...) asparagine glycosylation occurs at asparagine 7. The helical transmembrane segment at 33–53 threads the bilayer; sequence IPFCATYVIALIGNSLLLIII. Over 54–61 the chain is Cytoplasmic; sequence KSEPSLHE. Residues 62-82 form a helical membrane-spanning segment; sequence PMYIFLATLGATDISLSTSIV. The Extracellular portion of the chain corresponds to 83–103; sequence PKMLDIFWFHLPEIYFDACLF. Cysteine 101 and cysteine 184 are disulfide-bonded. A helical membrane pass occupies residues 104–124; that stretch reads QMWLIHTFQGIESGVLLAMAL. The Cytoplasmic portion of the chain corresponds to 125 to 146; sequence DRCVAICYPLRRAIVFTRQLVT. A helical transmembrane segment spans residues 147-167; that stretch reads YIVVGVTLRPAILVIPCLLLI. Residues 168 to 203 are Extracellular-facing; it reads KCHLKLYRTKLIYHTYCERVALVKLATEDVYINKVY. A helical transmembrane segment spans residues 204–224; sequence GILGAFIVGGLDFIFITLSYI. Over 225–255 the chain is Cytoplasmic; the sequence is QIFITVFHLPLKEARLKVFNTCIPHIYVFFQ. Residues 256 to 276 form a helical membrane-spanning segment; sequence FYLLAFFFIFYSQIWILYPII. Over 277 to 279 the chain is Extracellular; it reads CTY. A helical membrane pass occupies residues 280 to 300; sequence HLVQSLPTGPTIPQPLYLWVK. Residues 301-304 lie on the Cytoplasmic side of the membrane; it reads DQTH.

The protein belongs to the G-protein coupled receptor 1 family.

It is found in the cell membrane. Its function is as follows. Odorant receptor. The polypeptide is Olfactory receptor 52A4 (Homo sapiens (Human)).